The chain runs to 146 residues: Anti-sigma F factor (146 aa).

The protein belongs to the anti-sigma-factor family.

The catalysed reaction is L-seryl-[protein] + ATP = O-phospho-L-seryl-[protein] + ADP + H(+). The enzyme catalyses L-threonyl-[protein] + ATP = O-phospho-L-threonyl-[protein] + ADP + H(+). In terms of biological role, binds to sigma F and blocks its ability to form an RNA polymerase holoenzyme (E-sigma F). Phosphorylates SpoIIAA on a serine residue. This phosphorylation may enable SpoIIAA to act as an anti-anti-sigma factor that counteracts SpoIIAB and thus releases sigma F from inhibition. This is Anti-sigma F factor from Geobacillus thermodenitrificans (strain NG80-2).